A 48-amino-acid polypeptide reads, in one-letter code: 4-carboxymuconolactone decarboxylase (48 aa).

This sequence belongs to the carboxymuconolactone decarboxylase family.

It catalyses the reaction (R)-2-(carboxymethyl)-5-oxo-2,5-dihydro-2-furoate + H(+) = (4,5-dihydro-5-oxofuran-2-yl)-acetate + CO2. It participates in aromatic compound metabolism; beta-ketoadipate pathway; 5-oxo-4,5-dihydro-2-furylacetate from 3-carboxy-cis,cis-muconate: step 2/2. The sequence is that of 4-carboxymuconolactone decarboxylase from Pseudomonas putida (Arthrobacter siderocapsulatus).